A 110-amino-acid polypeptide reads, in one-letter code: MSAHLTVQVCYALPGEQTLIQLQLPPGVTLRQAIDASGVLTRHPEIDLTKHKTGVYGKLKPLDAVLADHDRVEIYRPLIVDPKLARQRRVEKSRQEGSVEGRKWLPKDSR.

A disordered region spans residues 86–110 (RQRRVEKSRQEGSVEGRKWLPKDSR). Residues 88–110 (RRVEKSRQEGSVEGRKWLPKDSR) show a composition bias toward basic and acidic residues.

It belongs to the UPF0125 (RnfH) family.

This is Protein RnfH from Paraburkholderia phymatum (strain DSM 17167 / CIP 108236 / LMG 21445 / STM815) (Burkholderia phymatum).